The primary structure comprises 49 residues: DEIGDAAKKLGDASYAFAKEVDCNNGIFLQAPGKFQPLEALKXIXKHXV.

As to quaternary structure, monomer. Binds 12 peridinin and 2 chlorophyll a molecules per monomer.

Its subcellular location is the plastid. It is found in the chloroplast. Water-soluble antenna for capture of solar energy in the blue-green range. Peridinin is an asymmetric carotenoid. In Alexandrium cohorticula (Dinoflagellate), this protein is Peridinin-chlorophyll a-binding protein.